A 42-amino-acid polypeptide reads, in one-letter code: uncharacterized protein (42 aa).

The chain crosses the membrane as a helical span at residues 15–35 (INVCLSFFFLFYFIFVLFFAA).

It localises to the membrane. This is an uncharacterized protein from Dictyostelium discoideum (Social amoeba).